The sequence spans 192 residues: UPF0149 protein YE3397 (192 aa).

It belongs to the UPF0149 family.

The polypeptide is UPF0149 protein YE3397 (Yersinia enterocolitica serotype O:8 / biotype 1B (strain NCTC 13174 / 8081)).